Consider the following 318-residue polypeptide: Ubiquitin-like domain-containing CTD phosphatase 1 (318 aa).

A Ubiquitin-like domain is found at 3-81; sequence LSLIIKWGGQ…IMMMGTREES (79 aa). Residues 133–294 form the FCP1 homology domain; sequence PREGKKLLVL…LKLTQYLKEI (162 aa). Mg(2+)-binding residues include Asp-143, Asp-145, and Asp-253.

The cofactor is Mg(2+).

It localises to the nucleus. It carries out the reaction O-phospho-L-seryl-[protein] + H2O = L-seryl-[protein] + phosphate. The enzyme catalyses O-phospho-L-threonyl-[protein] + H2O = L-threonyl-[protein] + phosphate. Its function is as follows. Dephosphorylates 26S nuclear proteasomes, thereby decreasing their proteolytic activity. Recruited to the 19S regulatory particle of the 26S proteasome where it dephosphorylates 19S component PSMC2 which impairs PSMC2 ATPase activity and disrupts 26S proteasome assembly. Has also been reported to stimulate the proteolytic activity of the 26S proteasome. This is Ubiquitin-like domain-containing CTD phosphatase 1 (UBLCP1) from Gallus gallus (Chicken).